The sequence spans 470 residues: Probable citrate synthase, mitochondrial (470 aa).

Residues histidine 297, histidine 351, and aspartate 406 contribute to the active site.

This sequence belongs to the citrate synthase family. In terms of assembly, homodimer.

Its subcellular location is the mitochondrion matrix. It carries out the reaction oxaloacetate + acetyl-CoA + H2O = citrate + CoA + H(+). Its pathway is carbohydrate metabolism; tricarboxylic acid cycle; isocitrate from oxaloacetate: step 1/2. In Leishmania major, this protein is Probable citrate synthase, mitochondrial.